A 604-amino-acid polypeptide reads, in one-letter code: Procollagen galactosyltransferase 1 (604 aa).

The signal sequence occupies residues 1-18 (MHLLCFFFLLLWTGPARS). Asn78, Asn166, Asn363, and Asn561 each carry an N-linked (GlcNAc...) asparagine glycan. Residues 570–580 (RARSRKSREQE) are compositionally biased toward basic and acidic residues. The interval 570-604 (RARSRKSREQEELSSEAQNTDVLQSPLDSTARDEL) is disordered. Residues 584–597 (SEAQNTDVLQSPLD) are compositionally biased toward polar residues. Residues 601 to 604 (RDEL) carry the Prevents secretion from ER motif.

It belongs to the glycosyltransferase 25 family.

It is found in the endoplasmic reticulum lumen. The catalysed reaction is (5R)-5-hydroxy-L-lysyl-[collagen] + UDP-alpha-D-galactose = (5R)-5-O-(beta-D-galactosyl)-5-hydroxy-L-lysyl-[collagen] + UDP + H(+). Beta-galactosyltransferase that transfers beta-galactose to hydroxylysine residues of type I collagen. By acting on collagen glycosylation, facilitates the formation of collagen triple helix. This Danio rerio (Zebrafish) protein is Procollagen galactosyltransferase 1 (colgalt1).